We begin with the raw amino-acid sequence, 342 residues long: Lipase B (342 aa).

Residues 1–18 (MKLLSLTGVAGVLATCVA) form the signal peptide. Residues 19–25 (ATPLVKR) constitute a propeptide that is removed on maturation. A disulfide bond links cysteine 47 and cysteine 89. The N-linked (GlcNAc...) asparagine glycan is linked to asparagine 99. Residues serine 130, aspartate 212, and histidine 249 contribute to the active site. Cystine bridges form between cysteine 241-cysteine 283 and cysteine 318-cysteine 336.

It carries out the reaction a triacylglycerol + H2O = a diacylglycerol + a fatty acid + H(+). Its function is as follows. Hydrolysis of triglycerides. Is very stereospecific both in hydrolysis and in organic synthesis and has a potentially important application in glucolipid synthesis. This chain is Lipase B, found in Pseudozyma antarctica (Yeast).